A 332-amino-acid polypeptide reads, in one-letter code: Malate dehydrogenase (332 aa).

NAD(+) contacts are provided by residues 16–17 (QI), aspartate 43, and glycine 90. Arginine 99 provides a ligand contact to oxaloacetate. Glutamine 113 and asparagine 132 together coordinate NAD(+). Oxaloacetate is bound by residues asparagine 132, arginine 163, histidine 188, and serine 243. Residue histidine 188 is the Proton acceptor of the active site.

The protein belongs to the LDH/MDH superfamily. MDH type 2 family. In terms of assembly, homodimer.

The protein resides in the cytoplasm. It carries out the reaction (S)-malate + NAD(+) = oxaloacetate + NADH + H(+). In terms of biological role, catalyzes the reduction of the carbonyl group of oxalacetic acid. No activity with pulegone. The protein is Malate dehydrogenase (MD1) of Nicotiana tabacum (Common tobacco).